Here is a 756-residue protein sequence, read N- to C-terminus: Cholesterol uptake protein 1 (756 aa).

An N-terminal signal peptide occupies residues 1–18 (MRTSQAIFILIFLDSVRN). Residues 19–268 (QSPQVIPAKW…TIESSMKIFD (250 aa)) are Extracellular-facing. Asparagine 39 and asparagine 63 each carry an N-linked (GlcNAc...) asparagine glycan. Positions 124–129 (VHYNFR) match the Cholesterol-binding sequence motif motif. Asparagine 140, asparagine 174, and asparagine 257 each carry an N-linked (GlcNAc...) asparagine glycan. A helical transmembrane segment spans residues 269–289 (YTIPIVFWACILLLVTIVVFV). Over 290–373 (YHYFDGIWER…YEERELKYDV (84 aa)) the chain is Cytoplasmic. A helical membrane pass occupies residues 374-394 (YKIALAIIGIFYNITVLQLII). Residues 395–421 (SKAGSLRQSGDLDECTFNFQCARPLWY) are Extracellular-facing. A helical transmembrane segment spans residues 422–442 (FVAFNNVVSNGGYVYFGTLII). Residues 443–473 (VMNYCRERSFRRLFAVQPTLAERYGLPQHSG) lie on the Cytoplasmic side of the membrane. A helical membrane pass occupies residues 474 to 494 (LMTAIGLAVIMEGISSATYHV). The Extracellular portion of the chain corresponds to 495–498 (CPNN). A helical membrane pass occupies residues 499 to 517 (INYQFDTALMYVIGMLGKL). Residues 518–530 (KIWSLRHPDMVVS) lie on the Cytoplasmic side of the membrane. A helical transmembrane segment spans residues 531–551 (AYHAFGFLGVFLMAAIAGVYV). The Extracellular portion of the chain corresponds to 552–554 (HNM). Residues 555–575 (IFWALFSIIYIASMLLVSLEF) form a helical membrane-spanning segment. Residues 570–578 (LVSLEFYFK) carry the Cholesterol-binding sequence motif motif. At 576–612 (YFKGIWTLNLRELRNSIRLSWVSSRHLSCVVPAYKAR) the chain is on the cytoplasmic side. A helical membrane pass occupies residues 613–633 (FFVILLLNIANTAVVVYGLEA). Over 634–637 (HPKD) the chain is Extracellular. A helical transmembrane segment spans residues 638-658 (FLSFLLIPFIGNLFIYIIYYI). Over 659 to 671 (LMKMIYREKIPKR) the chain is Cytoplasmic. Residues 672 to 692 (AIALLFAAVISWTCAGILFNQ) form a helical membrane-spanning segment. Over 693–728 (RVSDWSKMPAISRELNKPCIFLNFYDNHDLWHLSSA) the chain is Extracellular. Residues 729-749 (FAIFFSFTAINVIDDDLMFVM) form a helical membrane-spanning segment. Residues 750–756 (RNTIRVF) are Cytoplasmic-facing.

It belongs to the SID1 family. Highly expressed along the intestine with expression also detected in the pharynx, especially at the terminal bulb, and in the excretory gland cells.

The protein localises to the cell membrane. It catalyses the reaction cholesterol(in) = cholesterol(out). Cholesterol-binding protein which is involved in dietary cholesterol uptake from the environment. Does not play a role in double-stranded RNA transport in contrast to other SID1 family members. This is Cholesterol uptake protein 1 from Caenorhabditis elegans.